The chain runs to 529 residues: Bifunctional purine biosynthesis protein PurH (529 aa).

One can recognise an MGS-like domain in the interval threonine 2–valine 149.

It belongs to the PurH family.

The enzyme catalyses (6R)-10-formyltetrahydrofolate + 5-amino-1-(5-phospho-beta-D-ribosyl)imidazole-4-carboxamide = 5-formamido-1-(5-phospho-D-ribosyl)imidazole-4-carboxamide + (6S)-5,6,7,8-tetrahydrofolate. It carries out the reaction IMP + H2O = 5-formamido-1-(5-phospho-D-ribosyl)imidazole-4-carboxamide. Its pathway is purine metabolism; IMP biosynthesis via de novo pathway; 5-formamido-1-(5-phospho-D-ribosyl)imidazole-4-carboxamide from 5-amino-1-(5-phospho-D-ribosyl)imidazole-4-carboxamide (10-formyl THF route): step 1/1. It participates in purine metabolism; IMP biosynthesis via de novo pathway; IMP from 5-formamido-1-(5-phospho-D-ribosyl)imidazole-4-carboxamide: step 1/1. The sequence is that of Bifunctional purine biosynthesis protein PurH from Ruegeria pomeroyi (strain ATCC 700808 / DSM 15171 / DSS-3) (Silicibacter pomeroyi).